The sequence spans 196 residues: Corticoliberin (196 aa).

The signal sequence occupies residues 1–24 (MRLPLLLSAGVLLVVSLPCPPCRA). The propeptide occupies 25–153 (LLSRGPIPGA…RQETPERERR (129 aa)). Residues 122–158 (PRRQLDSPAGPAERGEENALGSRQETPERERRSEEPP) form a disordered region. Residues 146–156 (ETPERERRSEE) are compositionally biased toward basic and acidic residues. Isoleucine 194 is subject to Isoleucine amide.

This sequence belongs to the sauvagine/corticotropin-releasing factor/urotensin I family. In terms of assembly, interacts (via C-terminus) with CRFR1 (via N-terminal extracellular domain). In terms of tissue distribution, produced by the hypothalamus.

Its subcellular location is the secreted. Its function is as follows. Hormone regulating the release of corticotropin from pituitary gland. Induces NLRP6 in intestinal epithelial cells, hence may influence gut microbiota profile. This Canis lupus familiaris (Dog) protein is Corticoliberin (CRH).